Reading from the N-terminus, the 197-residue chain is Ribosomal RNA large subunit methyltransferase E (197 aa).

S-adenosyl-L-methionine-binding residues include glycine 50, tryptophan 52, aspartate 67, aspartate 83, and aspartate 111. Lysine 151 acts as the Proton acceptor in catalysis.

It belongs to the class I-like SAM-binding methyltransferase superfamily. RNA methyltransferase RlmE family.

It is found in the cytoplasm. The catalysed reaction is uridine(2552) in 23S rRNA + S-adenosyl-L-methionine = 2'-O-methyluridine(2552) in 23S rRNA + S-adenosyl-L-homocysteine + H(+). In terms of biological role, specifically methylates the uridine in position 2552 of 23S rRNA at the 2'-O position of the ribose in the fully assembled 50S ribosomal subunit. The protein is Ribosomal RNA large subunit methyltransferase E of Thermoplasma volcanium (strain ATCC 51530 / DSM 4299 / JCM 9571 / NBRC 15438 / GSS1).